Here is a 396-residue protein sequence, read N- to C-terminus: Tryptophan synthase beta chain (396 aa).

Lysine 86 carries the post-translational modification N6-(pyridoxal phosphate)lysine.

The protein belongs to the TrpB family. As to quaternary structure, tetramer of two alpha and two beta chains. Pyridoxal 5'-phosphate serves as cofactor.

The enzyme catalyses (1S,2R)-1-C-(indol-3-yl)glycerol 3-phosphate + L-serine = D-glyceraldehyde 3-phosphate + L-tryptophan + H2O. Its pathway is amino-acid biosynthesis; L-tryptophan biosynthesis; L-tryptophan from chorismate: step 5/5. The beta subunit is responsible for the synthesis of L-tryptophan from indole and L-serine. The chain is Tryptophan synthase beta chain from Yersinia pseudotuberculosis serotype O:1b (strain IP 31758).